The chain runs to 292 residues: Ribosomal RNA small subunit methyltransferase H (292 aa).

S-adenosyl-L-methionine-binding positions include G32–H34, D51, L87, D101, and Q108.

The protein belongs to the methyltransferase superfamily. RsmH family.

It localises to the cytoplasm. It carries out the reaction cytidine(1402) in 16S rRNA + S-adenosyl-L-methionine = N(4)-methylcytidine(1402) in 16S rRNA + S-adenosyl-L-homocysteine + H(+). Specifically methylates the N4 position of cytidine in position 1402 (C1402) of 16S rRNA. The protein is Ribosomal RNA small subunit methyltransferase H of Pseudothermotoga lettingae (strain ATCC BAA-301 / DSM 14385 / NBRC 107922 / TMO) (Thermotoga lettingae).